Here is a 2253-residue protein sequence, read N- to C-terminus: Genome polyprotein (2253 aa).

A disulfide bridge links Cys627 with Cys694. The short motif at 750–752 (RVD) is the Cell attachment site element. The region spanning 825–920 (LVYKNRGFYK…LFPGRKEITQ (96 aa)) is the LRAT domain. Active-site for protein 2A H-NC residues include His835 and His846. Cys904 (for protein 2A H-NC; Acyl-thioester intermediate) is an active-site residue. Residues 1002-1022 (IVLYCHAPNMLTTMCLGTLLV) traverse the membrane as a helical segment. In terms of domain architecture, SF3 helicase spans 1205–1366 (YSEMMRVNVR…ASYSRNNKLD (162 aa)). An O-(5'-phospho-RNA)-tyrosine modification is found at Tyr1559. Residues 1586–1775 (APYMQDLEHC…RAAAVHFISN (190 aa)) form the Peptidase C3 domain. Residues His1626, Asp1664, and Cys1739 each act as for protease 3C activity in the active site. Cys1970 serves as the catalytic Acyl-thioester intermediate. The RdRp catalytic domain maps to 2018 to 2132 (PYNYGLDYSS…SVSSPLDAEY (115 aa)). The Mg(2+) site is built by Asp2024 and Asp2118.

The protein belongs to the picornaviruses polyprotein family. In terms of assembly, interacts with capsid protein VP1 and capsid protein VP3 to form heterotrimeric protomers. Five protomers subsequently associate to form pentamers which serve as building blocks for the capsid. As to quaternary structure, interacts with capsid protein VP0, and capsid protein VP3 to form heterotrimeric protomers. Five protomers subsequently associate to form pentamers which serve as building blocks for the capsid. Interacts with capsid protein VP0 and capsid protein VP1 to form heterotrimeric protomers. Five protomers subsequently associate to form pentamers which serve as building blocks for the capsid. In terms of assembly, homohexamer; forms a hexameric ring structure with 6-fold symmetry characteristic of AAA+ ATPases. As to quaternary structure, homodimer. Interacts with host ACBD3. Interacts with RNA-directed RNA polymerase. In terms of assembly, interacts with Viral protein genome-linked. It depends on Mg(2+) as a cofactor. VPg is uridylylated by the polymerase and is covalently linked to the 5'-end of genomic RNA. This uridylylated form acts as a nucleotide-peptide primer for the polymerase. Post-translationally, specific enzymatic cleavages yield mature proteins. All cleavages are catalyzed by P3C.

It is found in the virion. The protein localises to the host cytoplasm. Its subcellular location is the host nucleus. It localises to the host nucleolus. The protein resides in the host cytoplasmic vesicle membrane. It is found in the host endoplasmic reticulum membrane. The protein localises to the host Golgi apparatus membrane. It catalyses the reaction RNA(n) + a ribonucleoside 5'-triphosphate = RNA(n+1) + diphosphate. The enzyme catalyses a ribonucleoside 5'-triphosphate + H2O = a ribonucleoside 5'-diphosphate + phosphate + H(+). The catalysed reaction is Selective cleavage of Gln-|-Gly bond in the poliovirus polyprotein. In other picornavirus reactions Glu may be substituted for Gln, and Ser or Thr for Gly.. Functionally, forms an icosahedral capsid of pseudo T=3 symmetry together with capsid proteins VP1 and VP3. The capsid is 300 Angstroms in diameter, composed of 60 copies of each capsid protein and enclosing the viral positive strand RNA genome. The attachment to the host cell receptor induces virion internalization predominantly through clathrin-mediated endocytosis. Binds packaging signals present in the viral RNA. Its function is as follows. Forms an icosahedral capsid of pseudo T=3 symmetry together with capsid proteins VP0 and VP1. The capsid is 300 Angstroms in diameter, composed of 60 copies of each capsid protein and enclosing the viral positive strand RNA genome. The attachment to the host cell receptor induces virion internalization predominantly through clathrin-mediated endocytosis. Binds packaging signals present in the viral RNA. In terms of biological role, forms an icosahedral capsid of pseudo T=3 symmetry together with capsid proteins VP0 and VP3. The capsid is 300 Angstroms in diameter, composed of 60 copies of each capsid protein and enclosing the viral positive strand RNA genome. The attachment to the host cell receptor induces virion internalization predominantly through clathrin-mediated endocytosis. Binds packaging signals present in the viral RNA. Mediates self-processing of the polyprotein by a translational effect termed 'ribosome skipping'. Mechanistically, 2A1-mediated cleavage occurs between the C-terminal glycine and the proline of the downstream protein 2A2. Functionally, plays an essential role in the virus replication cycle by acting as a viroporin. Creates a pore in the host endoplasmic reticulum and as a consequence releases Ca2+ in the cytoplasm of infected cell. In turn, high levels of cytoplasmic calcium may trigger membrane trafficking and transport of viral ER-associated proteins to viroplasms, sites of viral genome replication. Its function is as follows. Induces and associates with structural rearrangements of intracellular membranes. Displays RNA-binding, nucleotide binding and NTPase activities. May play a role in virion morphogenesis and viral RNA encapsidation by interacting with the capsid protein VP3. In terms of biological role, localizes the viral replication complex to the surface of membranous vesicles. It inhibits host cell endoplasmic reticulum-to-Golgi apparatus transport and causes the disassembly of the Golgi complex, possibly through GBF1 interaction. This would result in depletion of MHC, trail receptors and IFN receptors at the host cell surface. Plays an essential role in viral RNA replication by recruiting ACBD3 and PI4KB at the viral replication sites, thereby allowing the formation of the rearranged membranous structures where viral replication takes place. Acts as a primer for viral RNA replication and remains covalently bound to viral genomic RNA. VPg is uridylylated prior to priming replication into VPg-pUpU. The VPg-pUpU is then used as primer on the genomic RNA poly(A) by the RNA-dependent RNA polymerase to replicate the viral genome. Following genome release from the infecting virion in the cytoplasm, the VPg-RNA linkage is probably removed by host TDP2. During the late stage of the replication cycle, host TDP2 is excluded from sites of viral RNA synthesis and encapsidation, allowing for the generation of progeny virions. Functionally, cysteine protease that generates mature viral proteins from the precursor polyprotein. In addition to its proteolytic activity, it binds to viral RNA, and thus influences viral genome replication. RNA and substrate bind cooperatively to the protease. Its function is as follows. Replicates the viral genomic RNA on the surface of intracellular membranes. Covalently attaches UMP to a tyrosine of VPg, which is used to prime RNA synthesis. The positive stranded RNA genome is first replicated at virus induced membranous vesicles, creating a dsRNA genomic replication form. This dsRNA is then used as template to synthesize positive stranded RNA genomes. ss(+)RNA genomes are either translated, replicated or encapsidated. The protein is Genome polyprotein of Ljunganvirus 1 (LV).